A 57-amino-acid polypeptide reads, in one-letter code: COP9 signalosome complex subunit 9 (57 aa).

T26 carries the phosphothreonine modification.

The protein belongs to the CSN9 family. Component of the CSN complex, composed of COPS1/GPS1, COPS2, COPS3, COPS4, COPS5, COPS6, COPS7 (COPS7A or COPS7B), COPS8 and COPS9. In the complex, it interacts directly with COPS3, COPS5 and COPS6.

It is found in the nucleus. Its subcellular location is the cytoplasm. The protein resides in the nucleoplasm. In terms of biological role, component of the COP9 signalosome complex (CSN), a complex involved in various cellular and developmental processes. The CSN complex is an essential regulator of the ubiquitin (Ubl) conjugation pathway by mediating the deneddylation of the cullin subunits of SCF-type E3 ligase complexes, leading to decrease the Ubl ligase activity of SCF-type complexes such as SCF, CSA or DDB2. The complex is also involved in phosphorylation of p53/TP53, c-jun/JUN, IkappaBalpha/NFKBIA, ITPK1 and IRF8/ICSBP, possibly via its association with CK2 and PKD kinases. CSN-dependent phosphorylation of TP53 and JUN promotes and protects degradation by the Ubl system, respectively. Plays a role in cell proliferation. The protein is COP9 signalosome complex subunit 9 of Mus musculus (Mouse).